Consider the following 429-residue polypeptide: Glutamate-1-semialdehyde 2,1-aminomutase (429 aa).

Lysine 265 is subject to N6-(pyridoxal phosphate)lysine.

Belongs to the class-III pyridoxal-phosphate-dependent aminotransferase family. HemL subfamily. In terms of assembly, homodimer. Requires pyridoxal 5'-phosphate as cofactor.

It localises to the cytoplasm. It carries out the reaction (S)-4-amino-5-oxopentanoate = 5-aminolevulinate. It functions in the pathway porphyrin-containing compound metabolism; protoporphyrin-IX biosynthesis; 5-aminolevulinate from L-glutamyl-tRNA(Glu): step 2/2. This Legionella pneumophila (strain Lens) protein is Glutamate-1-semialdehyde 2,1-aminomutase.